The following is a 4262-amino-acid chain: Polyketide synthase PksM (4262 aa).

The N-terminal hotdog fold 1 stretch occupies residues 1-114 (MITEQLHISL…ADMHRKEQTA (114 aa)). The PKS/mFAS DH 1 domain maps to 1–271 (MITEQLHISL…GKSVRNMSAF (271 aa)). Histidine 18 serves as the catalytic Proton acceptor; for dehydratase activity 1. The interval 129-271 (DRILNLDEIY…GKSVRNMSAF (143 aa)) is C-terminal hotdog fold 1. Aspartate 190 serves as the catalytic Proton donor; for dehydratase activity 1. Positions 293–367 (PAFEMYLRQL…ELAAHLADHY (75 aa)) constitute a Carrier 1 domain. Serine 327 is modified (O-(pantetheine 4'-phosphoryl)serine). In terms of domain architecture, Ketosynthase family 3 (KS3) 1 spans 393–831 (GEDIAIIGMA…GSNAHLILEE (439 aa)). Active-site for beta-ketoacyl synthase 1 activity residues include cysteine 569, histidine 704, and histidine 744. Residues 1009–1135 (HPLVHRNTSD…GRAVISDEAE (127 aa)) are N-terminal hotdog fold 2. The PKS/mFAS DH 2 domain occupies 1009–1301 (HPLVHRNTSD…MRALDGEQHS (293 aa)). The active-site Proton acceptor; for dehydratase activity 2 is histidine 1038. The segment at 1149–1301 (SLDTVTSEQC…MRALDGEQHS (153 aa)) is C-terminal hotdog fold 2. Aspartate 1211 functions as the Proton donor; for dehydratase activity 2 in the catalytic mechanism. Residues 2188 to 2261 (EKSTEYMKKL…ALVEHFIKTK (74 aa)) form the Carrier 2 domain. At serine 2222 the chain carries O-(pantetheine 4'-phosphoryl)serine. Residues 2275–2291 (VQQHTPAESRTQSSQKP) show a composition bias toward polar residues. The tract at residues 2275-2313 (VQQHTPAESRTQSSQKPDQAAKRTRRFRKLGFSGEKETP) is disordered. In terms of domain architecture, Ketosynthase family 3 (KS3) 2 spans 2319–2734 (SRDVAVIGIS…GSNAHIILEE (416 aa)). Active-site for beta-ketoacyl synthase 2 activity residues include cysteine 2476, histidine 2611, and histidine 2651. Positions 2750-2826 (ALIVLSAKNM…DFIENKADSL (77 aa)) form a coiled coil. Positions 3409–3486 (SIEKRLEHDL…ELISFFLTDH (78 aa)) constitute a Carrier 3 domain. Serine 3446 bears the O-(pantetheine 4'-phosphoryl)serine mark. The Ketosynthase family 3 (KS3) 3 domain maps to 3529–3944 (DEPIAIIGMS…GTNAHAVIEE (416 aa)). Residues cysteine 3690, histidine 3825, and histidine 3865 each act as for beta-ketoacyl synthase 3 activity in the active site. Residues 4004–4033 (KAMEARLAIVANNQEQLVRKLKEYVEAMKN) are a coiled coil. The Carrier 4 domain occupies 4135–4212 (NGKTHIQKII…ALSDHLALKA (78 aa)). O-(pantetheine 4'-phosphoryl)serine is present on serine 4172.

It depends on pantetheine 4'-phosphate as a cofactor.

Its subcellular location is the cytoplasm. Its pathway is antibiotic biosynthesis; bacillaene biosynthesis. Its function is as follows. Involved in some intermediate steps for the synthesis of the antibiotic polyketide bacillaene which is involved in secondary metabolism. The protein is Polyketide synthase PksM (pksM) of Bacillus subtilis (strain 168).